Consider the following 364-residue polypeptide: tRNA 2-selenouridine synthase (364 aa).

The Rhodanese domain occupies 14–137 (LLADTPLIDV…LRQTAIQATW (124 aa)). C97 functions as the S-selanylcysteine intermediate in the catalytic mechanism.

It belongs to the SelU family. In terms of assembly, monomer.

It catalyses the reaction 5-methylaminomethyl-2-thiouridine(34) in tRNA + selenophosphate + (2E)-geranyl diphosphate + H2O + H(+) = 5-methylaminomethyl-2-selenouridine(34) in tRNA + (2E)-thiogeraniol + phosphate + diphosphate. The catalysed reaction is 5-methylaminomethyl-2-thiouridine(34) in tRNA + (2E)-geranyl diphosphate = 5-methylaminomethyl-S-(2E)-geranyl-thiouridine(34) in tRNA + diphosphate. It carries out the reaction 5-methylaminomethyl-S-(2E)-geranyl-thiouridine(34) in tRNA + selenophosphate + H(+) = 5-methylaminomethyl-2-(Se-phospho)selenouridine(34) in tRNA + (2E)-thiogeraniol. The enzyme catalyses 5-methylaminomethyl-2-(Se-phospho)selenouridine(34) in tRNA + H2O = 5-methylaminomethyl-2-selenouridine(34) in tRNA + phosphate. Involved in the post-transcriptional modification of the uridine at the wobble position (U34) of tRNA(Lys), tRNA(Glu) and tRNA(Gln). Catalyzes the conversion of 2-thiouridine (S2U-RNA) to 2-selenouridine (Se2U-RNA). Acts in a two-step process involving geranylation of 2-thiouridine (S2U) to S-geranyl-2-thiouridine (geS2U) and subsequent selenation of the latter derivative to 2-selenouridine (Se2U) in the tRNA chain. This is tRNA 2-selenouridine synthase from Salmonella enteritidis PT4 (strain P125109).